Consider the following 81-residue polypeptide: Large ribosomal subunit protein bL27 (81 aa).

Residues 1–11 (MATSKSGGSSK) show a composition bias toward polar residues. Residues 1–20 (MATSKSGGSSKNGRDSISKR) are disordered.

Belongs to the bacterial ribosomal protein bL27 family.

This is Large ribosomal subunit protein bL27 from Borreliella afzelii (strain PKo) (Borrelia afzelii).